A 300-amino-acid polypeptide reads, in one-letter code: Acetylglutamate kinase (300 aa).

Residues glycine 68–glycine 69, arginine 90, and asparagine 194 each bind substrate.

This sequence belongs to the acetylglutamate kinase family. ArgB subfamily.

It localises to the cytoplasm. The catalysed reaction is N-acetyl-L-glutamate + ATP = N-acetyl-L-glutamyl 5-phosphate + ADP. It participates in amino-acid biosynthesis; L-arginine biosynthesis; N(2)-acetyl-L-ornithine from L-glutamate: step 2/4. Catalyzes the ATP-dependent phosphorylation of N-acetyl-L-glutamate. This chain is Acetylglutamate kinase, found in Methanocella arvoryzae (strain DSM 22066 / NBRC 105507 / MRE50).